The sequence spans 191 residues: CASP-like protein 2U3 (191 aa).

At 1–25 (MGAYDGAEAPRAAPASTAANSRPSR) the chain is on the cytoplasmic side. Residues 26–46 (LLLLHSLLLRLVAVVVSILVI) traverse the membrane as a helical segment. Residues 47-68 (AVMVHAKQRVMIFKAEWDNSKA) lie on the Extracellular side of the membrane. Residues 69-89 (FVALVAISAICLGYSFLQFIL) form a helical membrane-spanning segment. Residues 90-114 (SAFHLCSKSWKSPTKCWAWMNFIAD) are Cytoplasmic-facing. Residues 115–135 (QILTYAMLGAAAAAAELAYIA) form a helical membrane-spanning segment. Residues 136–157 (KNGSSRAQWQPICSTFNTFCTR) are Extracellular-facing. Asparagine 137 is a glycosylation site (N-linked (GlcNAc...) asparagine). The helical transmembrane segment at 158–178 (AGASIILSFIAVLALANSSAI) threads the bilayer. Topologically, residues 179–191 (SAYHLFRRPSSSV) are cytoplasmic.

Belongs to the Casparian strip membrane proteins (CASP) family. As to quaternary structure, homodimer and heterodimers.

The protein localises to the cell membrane. In Selaginella moellendorffii (Spikemoss), this protein is CASP-like protein 2U3.